The sequence spans 318 residues: Protoheme IX farnesyltransferase (318 aa).

The next 9 membrane-spanning stretches (helical) occupy residues 34-54 (VMSL…GQIN), 55-75 (PVIG…SGAL), 95-115 (IPAG…LSAF), 118-138 (IILG…TIFF), 155-175 (IVIG…CVTG), 182-202 (IVLF…LALF), 228-250 (IVVY…FASL), 254-273 (AFAT…VLRM), and 287-307 (FAFS…DYMI).

This sequence belongs to the UbiA prenyltransferase family. Protoheme IX farnesyltransferase subfamily.

It is found in the cell inner membrane. The enzyme catalyses heme b + (2E,6E)-farnesyl diphosphate + H2O = Fe(II)-heme o + diphosphate. It functions in the pathway porphyrin-containing compound metabolism; heme O biosynthesis; heme O from protoheme: step 1/1. Its function is as follows. Converts heme B (protoheme IX) to heme O by substitution of the vinyl group on carbon 2 of heme B porphyrin ring with a hydroxyethyl farnesyl side group. This Sinorhizobium fredii (strain NBRC 101917 / NGR234) protein is Protoheme IX farnesyltransferase.